We begin with the raw amino-acid sequence, 524 residues long: 2-isopropylmalate synthase (524 aa).

Residues 5-267 (VIIFDTTLRD…HTNIRHSEIH (263 aa)) form the Pyruvate carboxyltransferase domain. 4 residues coordinate Mn(2+): aspartate 14, histidine 202, histidine 204, and asparagine 238. Positions 392–524 (KLEYLGVQSG…KTDKINTESV (133 aa)) are regulatory domain.

The protein belongs to the alpha-IPM synthase/homocitrate synthase family. LeuA type 1 subfamily. Homodimer. It depends on Mn(2+) as a cofactor.

It localises to the cytoplasm. It carries out the reaction 3-methyl-2-oxobutanoate + acetyl-CoA + H2O = (2S)-2-isopropylmalate + CoA + H(+). It functions in the pathway amino-acid biosynthesis; L-leucine biosynthesis; L-leucine from 3-methyl-2-oxobutanoate: step 1/4. In terms of biological role, catalyzes the condensation of the acetyl group of acetyl-CoA with 3-methyl-2-oxobutanoate (2-ketoisovalerate) to form 3-carboxy-3-hydroxy-4-methylpentanoate (2-isopropylmalate). The sequence is that of 2-isopropylmalate synthase from Aeromonas salmonicida (strain A449).